We begin with the raw amino-acid sequence, 208 residues long: Putative 3-methyladenine DNA glycosylase (208 aa).

The protein belongs to the DNA glycosylase MPG family.

This Nitrobacter winogradskyi (strain ATCC 25391 / DSM 10237 / CIP 104748 / NCIMB 11846 / Nb-255) protein is Putative 3-methyladenine DNA glycosylase.